Here is a 273-residue protein sequence, read N- to C-terminus: Large ribosomal subunit protein uL2cy (273 aa).

2 disordered regions span residues methionine 1–valine 22 and asparagine 224–lysine 273.

It belongs to the universal ribosomal protein uL2 family. In terms of assembly, part of the 50S ribosomal subunit.

The protein resides in the plastid. It localises to the chloroplast. The protein is Large ribosomal subunit protein uL2cy (rpl2-B) of Chloranthus spicatus (Chulantree).